The sequence spans 273 residues: Glutamate racemase (273 aa).

Substrate-binding positions include 11 to 12 (DS) and 43 to 44 (YG). C74 (proton donor/acceptor) is an active-site residue. 75–76 (NT) is a substrate binding site. C185 acts as the Proton donor/acceptor in catalysis. Substrate is bound at residue 186–187 (TH).

It belongs to the aspartate/glutamate racemases family. Homodimer.

The catalysed reaction is L-glutamate = D-glutamate. Its pathway is cell wall biogenesis; peptidoglycan biosynthesis. Provides the (R)-glutamate required for cell wall biosynthesis. The sequence is that of Glutamate racemase from Enterococcus faecalis (strain ATCC 700802 / V583).